Here is a 186-residue protein sequence, read N- to C-terminus: Negative modulator of initiation of replication (186 aa).

The tract at residues 93-94 (AV) is interaction with DNA.

It belongs to the SeqA family. Homodimer. Polymerizes to form helical filaments.

The protein resides in the cytoplasm. Negative regulator of replication initiation, which contributes to regulation of DNA replication and ensures that replication initiation occurs exactly once per chromosome per cell cycle. Binds to pairs of hemimethylated GATC sequences in the oriC region, thus preventing assembly of replication proteins and re-initiation at newly replicated origins. Repression is relieved when the region becomes fully methylated. The chain is Negative modulator of initiation of replication from Shewanella halifaxensis (strain HAW-EB4).